The sequence spans 1172 residues: Structural maintenance of chromosomes protein 2 (1172 aa).

Position 32–39 (32–39 (GLNGSGKS)) interacts with ATP. 2 coiled-coil regions span residues 172-204 (RMFE…EEIE) and 258-507 (SHIA…AYME). The region spanning 520–640 (SKVKGLVAQL…CDTPESAKKV (121 aa)) is the SMC hinge domain. Residues 676 to 941 (LLQIQKLNSL…INHLEKENDW (266 aa)) are a coiled coil.

This sequence belongs to the SMC family. SMC2 subfamily. In terms of assembly, forms a heterodimer with cut3/smc4. Component of the condensin complex, which contains the cut3 and cut14 heterodimer, and three non smc subunits that probably regulate the complex: cnd1, cnd2 and cnd3.

The protein localises to the nucleus. The protein resides in the cytoplasm. Its subcellular location is the chromosome. Functionally, central component of the condensin complex, a complex required for conversion of interphase chromatin into mitotic-like condense chromosomes. The condensin complex probably introduces positive supercoils into relaxed DNA in the presence of type I topoisomerases and converts nicked DNA into positive knotted forms in the presence of type II topoisomerases. In Schizosaccharomyces pombe (strain 972 / ATCC 24843) (Fission yeast), this protein is Structural maintenance of chromosomes protein 2 (cut14).